Here is a 175-residue protein sequence, read N- to C-terminus: NADH-quinone oxidoreductase subunit I 1 (175 aa).

2 consecutive 4Fe-4S ferredoxin-type domains span residues 44-74 (LNRWPDGLEKCIGCELCAWACPADAIFVESA) and 90-119 (RVYQINYLRCIGCGFCIEACPTRALTMIND). Residues cysteine 54, cysteine 57, cysteine 60, cysteine 64, cysteine 99, cysteine 102, cysteine 105, and cysteine 109 each contribute to the [4Fe-4S] cluster site.

Belongs to the complex I 23 kDa subunit family. NDH-1 is composed of 14 different subunits. Subunits NuoA, H, J, K, L, M, N constitute the membrane sector of the complex. Requires [4Fe-4S] cluster as cofactor.

The protein localises to the cell membrane. It catalyses the reaction a quinone + NADH + 5 H(+)(in) = a quinol + NAD(+) + 4 H(+)(out). NDH-1 shuttles electrons from NADH, via FMN and iron-sulfur (Fe-S) centers, to quinones in the respiratory chain. The immediate electron acceptor for the enzyme in this species is believed to be menaquinone. Couples the redox reaction to proton translocation (for every two electrons transferred, four hydrogen ions are translocated across the cytoplasmic membrane), and thus conserves the redox energy in a proton gradient. In Mycolicibacterium paratuberculosis (strain ATCC BAA-968 / K-10) (Mycobacterium paratuberculosis), this protein is NADH-quinone oxidoreductase subunit I 1.